The following is a 511-amino-acid chain: Cytochrome P450 monooxygenase esdpI (511 aa).

Residues 14–34 (VRAGLAIGVAILAIIVLFPGI) traverse the membrane as a helical segment. Cys453 is a binding site for heme.

The protein belongs to the cytochrome P450 family. The cofactor is heme.

It localises to the membrane. It functions in the pathway secondary metabolite biosynthesis; terpenoid biosynthesis. Functionally, cytochrome P450 monooxygenase; part of the cluster that mediates the biosynthesis of shearones, diterpenoid pyrones (DPs) which are structurally diverse meroterpenoids consisting of a diterpene linked by a pyrone, and which may exhibit a range of bioactivities. Whitin the pathway, esdpI takes part in the molecular scaffold modification via the hydroxylation at C-20 and can transform shearone C into shearone G. The molecular scaffold is commonly biosynthesized by a series of enzymes including the non-reducing polyketide synthase (NR-PKS) esdpA that generates an alpha-pyrone; the prenyltransferase esdpC that attaches a geranylgeranyl pyrophosphate (GGPP) produced by the GGPP synthase (GGPPS) esdpD onto the pyrone unit; the FAD-dependent monooxygenase esdpE that converts an olefin on the diterpene unit into an epoxide; and the terpene cyclase esdpB that catalyzes the cyclization reactions to give the molecular backbone shearone A. In the modification steps, esdpF oxidizes the hydroxy group to a ketone at C-3 and esdpG then attaches hydroxy groups at both C-11 and C-12. After that, esdpI hydroxylates at C-20 and esdpH hydroxylates at C-6'. The ether bridge is generated by nucleophilic attack of the hydroxy group at C-20 to the carbonyl carbon at C-3. EsdpH can also functions prior to esdpI. The different combinations of these modification enzymes lead to the production of diverse shearone derivatives, shearone I being the end product of the pathway. The alpha-ketoglutarate-dependent dioxygenase esdpJ seems not to be involved in this pathway. This chain is Cytochrome P450 monooxygenase esdpI, found in Penicillium shearii (Eupenicillium shearii).